Here is a 220-residue protein sequence, read N- to C-terminus: Phosphatidylserine decarboxylase proenzyme (220 aa).

Ser-188 (schiff-base intermediate with substrate; via pyruvic acid) is an active-site residue. A Pyruvic acid (Ser); by autocatalysis modification is found at Ser-188.

This sequence belongs to the phosphatidylserine decarboxylase family. PSD-A subfamily. Heterodimer of a large membrane-associated beta subunit and a small pyruvoyl-containing alpha subunit. It depends on pyruvate as a cofactor. Post-translationally, is synthesized initially as an inactive proenzyme. Formation of the active enzyme involves a self-maturation process in which the active site pyruvoyl group is generated from an internal serine residue via an autocatalytic post-translational modification. Two non-identical subunits are generated from the proenzyme in this reaction, and the pyruvate is formed at the N-terminus of the alpha chain, which is derived from the carboxyl end of the proenzyme. The post-translation cleavage follows an unusual pathway, termed non-hydrolytic serinolysis, in which the side chain hydroxyl group of the serine supplies its oxygen atom to form the C-terminus of the beta chain, while the remainder of the serine residue undergoes an oxidative deamination to produce ammonia and the pyruvoyl prosthetic group on the alpha chain.

The protein resides in the cell membrane. The catalysed reaction is a 1,2-diacyl-sn-glycero-3-phospho-L-serine + H(+) = a 1,2-diacyl-sn-glycero-3-phosphoethanolamine + CO2. The protein operates within phospholipid metabolism; phosphatidylethanolamine biosynthesis; phosphatidylethanolamine from CDP-diacylglycerol: step 2/2. Its function is as follows. Catalyzes the formation of phosphatidylethanolamine (PtdEtn) from phosphatidylserine (PtdSer). In Cytophaga hutchinsonii (strain ATCC 33406 / DSM 1761 / CIP 103989 / NBRC 15051 / NCIMB 9469 / D465), this protein is Phosphatidylserine decarboxylase proenzyme.